The primary structure comprises 147 residues: Ubiquitin-conjugating enzyme E2 D4 (147 aa).

Residues 1 to 147 (MALKRIQKEL…AREWTQKYAM (147 aa)) enclose the UBC core domain. Cysteine 85 serves as the catalytic Glycyl thioester intermediate.

The protein belongs to the ubiquitin-conjugating enzyme family.

It carries out the reaction S-ubiquitinyl-[E1 ubiquitin-activating enzyme]-L-cysteine + [E2 ubiquitin-conjugating enzyme]-L-cysteine = [E1 ubiquitin-activating enzyme]-L-cysteine + S-ubiquitinyl-[E2 ubiquitin-conjugating enzyme]-L-cysteine.. Its pathway is protein modification; protein ubiquitination. In terms of biological role, accepts ubiquitin from the E1 complex and catalyzes its covalent attachment to other proteins. In vitro able to promote polyubiquitination using all 7 ubiquitin Lys residues, but may prefer 'Lys-11' and 'Lys-48'-linked polyubiquitination. The chain is Ubiquitin-conjugating enzyme E2 D4 (UBE2D4) from Homo sapiens (Human).